We begin with the raw amino-acid sequence, 121 residues long: Movement protein TGBp3 (121 aa).

Residues 1-40 (MHYPTEADTSTGPNPSATSAPVRPRHVTPSLSPSSSSSPS) form a disordered region. The Lumenal segment spans residues 1–43 (MHYPTEADTSTGPNPSATSAPVRPRHVTPSLSPSSSSSPSPDS). The span at 7–19 (ADTSTGPNPSATS) shows a compositional bias: polar residues. A compositionally biased stretch (low complexity) spans 29 to 40 (PSLSPSSSSSPS). A helical membrane pass occupies residues 44–64 (FYYFLAAAVILTAALAAALLT). Over 65-121 (PNPGCTIVITGHTTIIQGSCPIPPQLVLAAHPRGLSLEQYLKFTNTLPDGSQHRSHR) the chain is Cytoplasmic.

The protein belongs to the Tymovirales TGBp3 protein family.

The protein localises to the host endoplasmic reticulum membrane. Functionally, plays a role in viral cell-to-cell propagation, by facilitating genome transport to neighboring plant cells through plasmosdesmata. May induce the formation of granular vesicles derived from the Endoplasmic reticulum, which align on actin filaments. The protein is Movement protein TGBp3 of Plantago asiatica (P1AMV).